We begin with the raw amino-acid sequence, 911 residues long: Nitrate reductase [NADH], clone PBNBR1412 (911 aa).

Residues 53–72 (NDAVDDSYDSSDDEDESHNR) are disordered. Residues 56–68 (VDDSYDSSDDEDE) show a composition bias toward acidic residues. Mo-molybdopterin is bound at residue C191. One can recognise a Cytochrome b5 heme-binding domain in the interval 539 to 614 (AKMYSMSEVR…LEDYRIGELI (76 aa)). Heme contacts are provided by H574 and H597. An FAD-binding FR-type domain is found at 654–766 (REKVPVTLIE…KGPLGHIEYL (113 aa)). FAD is bound by residues 706-709 (RAYT), 723-727 (VVKVY), F728, F735, 740-742 (LMS), and T793.

Belongs to the nitrate reductase family. As to quaternary structure, homodimer. FAD is required as a cofactor. Heme serves as cofactor. Requires Mo-molybdopterin as cofactor.

It catalyses the reaction nitrite + NAD(+) + H2O = nitrate + NADH + H(+). In terms of biological role, nitrate reductase is a key enzyme involved in the first step of nitrate assimilation in plants, fungi and bacteria. This chain is Nitrate reductase [NADH], clone PBNBR1412 (NIA2), found in Brassica napus (Rape).